We begin with the raw amino-acid sequence, 529 residues long: BTB/POZ domain-containing protein 6 (529 aa).

Residues 127–197 (ADVHFIVGPA…LYSDEIDLEA (71 aa)) form the BTB domain.

Homodimer and heterodimer. Interacts with cul3 via the BTB domain.

It localises to the cytoplasm. Functionally, adapter protein for the cul3 E3 ubiquitin-protein ligase complex. Involved in late neuronal development and muscle formation. The protein is BTB/POZ domain-containing protein 6 (btbd6) of Xenopus tropicalis (Western clawed frog).